Reading from the N-terminus, the 1410-residue chain is DNA-directed RNA polymerase subunit beta' (1410 aa).

4 residues coordinate Zn(2+): C70, C72, C85, and C88. Residues D460, D462, and D464 each contribute to the Mg(2+) site. Residues C814, C888, C895, and C898 each coordinate Zn(2+).

This sequence belongs to the RNA polymerase beta' chain family. As to quaternary structure, the RNAP catalytic core consists of 2 alpha, 1 beta, 1 beta' and 1 omega subunit. When a sigma factor is associated with the core the holoenzyme is formed, which can initiate transcription. It depends on Mg(2+) as a cofactor. Zn(2+) serves as cofactor.

It carries out the reaction RNA(n) + a ribonucleoside 5'-triphosphate = RNA(n+1) + diphosphate. Its function is as follows. DNA-dependent RNA polymerase catalyzes the transcription of DNA into RNA using the four ribonucleoside triphosphates as substrates. The protein is DNA-directed RNA polymerase subunit beta' of Buchnera aphidicola subsp. Cinara cedri (strain Cc).